We begin with the raw amino-acid sequence, 1400 residues long: DNA-directed RNA polymerase subunit beta' (1400 aa).

Zn(2+)-binding residues include cysteine 71, cysteine 73, cysteine 86, and cysteine 89. Mg(2+) is bound by residues aspartate 462, aspartate 464, and aspartate 466. Positions 811, 885, 892, and 895 each coordinate Zn(2+).

Belongs to the RNA polymerase beta' chain family. In terms of assembly, the RNAP catalytic core consists of 2 alpha, 1 beta, 1 beta' and 1 omega subunit. When a sigma factor is associated with the core the holoenzyme is formed, which can initiate transcription. The cofactor is Mg(2+). Zn(2+) is required as a cofactor.

The enzyme catalyses RNA(n) + a ribonucleoside 5'-triphosphate = RNA(n+1) + diphosphate. DNA-dependent RNA polymerase catalyzes the transcription of DNA into RNA using the four ribonucleoside triphosphates as substrates. This is DNA-directed RNA polymerase subunit beta' from Brucella ovis (strain ATCC 25840 / 63/290 / NCTC 10512).